The sequence spans 730 residues: Exostosin-1a (730 aa).

The Cytoplasmic segment spans residues 1–6 (MQAKKR). The chain crosses the membrane as a helical; Signal-anchor for type II membrane protein span at residues 7-27 (YLILFSAGVCLILLFYLQGPA). Topologically, residues 28-730 (SRRTPKRGDD…RKKYRDIERL (703 aa)) are lumenal. Asparagine 314 is a glycosylation site (N-linked (GlcNAc...) asparagine). The UDP-N-acetyl-alpha-D-glucosamine site is built by arginine 533, aspartate 549, glutamate 550, aspartate 551, glutamate 637, aspartate 638, and arginine 685. Aspartate 551 is a binding site for Mn(2+). A disulfide bridge links cysteine 636 with cysteine 688. Aspartate 638 is an active-site residue.

It belongs to the glycosyltransferase 47 family. The cofactor is Mn(2+).

The protein resides in the endoplasmic reticulum membrane. The catalysed reaction is 3-O-{[(1-&gt;4)-beta-D-GlcA-(1-&gt;4)-alpha-D-GlcNAc](n)-(1-&gt;4)-beta-D-GlcA-(1-&gt;3)-beta-D-Gal-(1-&gt;3)-beta-D-Gal-(1-&gt;4)-beta-D-Xyl}-L-seryl-[protein] + UDP-N-acetyl-alpha-D-glucosamine = 3-O-{alpha-D-GlcNAc-[(1-&gt;4)-beta-D-GlcA-(1-&gt;4)-alpha-D-GlcNAc](n)-(1-&gt;4)-beta-D-GlcA-(1-&gt;3)-beta-D-Gal-(1-&gt;3)-beta-D-Gal-(1-&gt;4)-beta-D-Xyl}-L-seryl-[protein] + UDP + H(+). It catalyses the reaction 3-O-{alpha-D-GlcNAc-[(1-&gt;4)-beta-D-GlcA-(1-&gt;4)-alpha-D-GlcNAc](n)-(1-&gt;4)-beta-D-GlcA-(1-&gt;3)-beta-D-Gal-(1-&gt;3)-beta-D-Gal-(1-&gt;4)-beta-D-Xyl}-L-seryl-[protein] + UDP-alpha-D-glucuronate = 3-O-{[(1-&gt;4)-beta-D-GlcA-(1-&gt;4)-alpha-D-GlcNAc](n+1)-(1-&gt;4)-beta-D-GlcA-(1-&gt;3)-beta-D-Gal-(1-&gt;3)-beta-D-Gal-(1-&gt;4)-beta-D-Xyl}-L-seryl-[protein] + UDP + H(+). The protein operates within protein modification; protein glycosylation. Glycosyltransferase required for the biosynthesis of heparan-sulfate. The sequence is that of Exostosin-1a (ext1a) from Danio rerio (Zebrafish).